Reading from the N-terminus, the 229-residue chain is Ribonuclease 3 (229 aa).

Residues 3 to 125 (VNALQEKLGY…LIGGIFLDSN (123 aa)) enclose the RNase III domain. Glu38 is a binding site for Mg(2+). Residue Asp42 is part of the active site. The Mg(2+) site is built by Asn111 and Glu114. Glu114 is a catalytic residue. The DRBM domain occupies 155–225 (DPKTRLQEYM…AAKVLEALEH (71 aa)).

This sequence belongs to the ribonuclease III family. Homodimer. The cofactor is Mg(2+).

It localises to the cytoplasm. It catalyses the reaction Endonucleolytic cleavage to 5'-phosphomonoester.. Its function is as follows. Digests double-stranded RNA. Involved in the processing of primary rRNA transcript to yield the immediate precursors to the large and small rRNAs (23S and 16S). Processes some mRNAs, and tRNAs when they are encoded in the rRNA operon. Processes pre-crRNA and tracrRNA of type II CRISPR loci if present in the organism. The sequence is that of Ribonuclease 3 from Blochmanniella pennsylvanica (strain BPEN).